A 519-amino-acid chain; its full sequence is Cyclic AMP-responsive element-binding protein 3-like protein 1 (519 aa).

The segment at 1–60 (MDAVLEPFPADRLFPGSSFLDLGDLNESDFLNNAHFPEHLDHFTENMEDFSNDLFSSFFD) is required for transcriptional activation. The Cytoplasmic segment spans residues 1 to 374 (MDAVLEPFPA…YKMAATQTGT (374 aa)). Residues 71-98 (LDMELDSPTPGIQAEHSYSLSGDSAPQS) are disordered. Positions 86–97 (HSYSLSGDSAPQ) are enriched in polar residues. Lysine 184 is covalently cross-linked (Glycyl lysine isopeptide (Lys-Gly) (interchain with G-Cter in SUMO2)). Residues 200-259 (DLVQMPPTPPSSHGSDSDGSQSPRSLPPSSPVRPMARSSTAISTSPLLTAPHKLQGTSGP) form a disordered region. Over residues 210-223 (SSHGSDSDGSQSPR) the composition is skewed to low complexity. Positions 236–246 (RSSTAISTSPL) are enriched in polar residues. The region spanning 290-353 (ALKRVRRKIK…RTLLQQLQKL (64 aa)) is the bZIP domain. A basic motif region spans residues 292–321 (KRVRRKIKNKISAQESRRKKKEYVECLEKK). The segment at 332–353 (LWKKVETLENANRTLLQQLQKL) is leucine-zipper. Residues 375–395 (CLMVAALCFVLVLGSLVPCLP) form a helical; Signal-anchor for type II membrane protein membrane-spanning segment. Positions 392 to 395 (PCLP) match the MBTPS2 recognition motif. Topologically, residues 396–519 (EFSSGSQTVK…LGPNTTIKLS (124 aa)) are lumenal. The MBTPS1 recognition signature appears at 423–426 (RSLL). The tract at residues 484–519 (EAWPKDGGNGTSPDFSHSKEWFHDRDLGPNTTIKLS) is disordered. An N-linked (GlcNAc...) asparagine glycan is attached at asparagine 492. A compositionally biased stretch (basic and acidic residues) spans 499–510 (SHSKEWFHDRDL). The N-linked (GlcNAc...) asparagine glycan is linked to asparagine 513.

It belongs to the bZIP family. ATF subfamily. As to quaternary structure, interacts with SMAD4, the interaction takes place upon TGFB1 induction and SMAD4 acts as a CREB3L1 coactivator to induce the expression of genes involved in assembly of collagen extracellular matrix. Upon ER stress or DNA damage, translocated to the Golgi apparatus, where it is processed by regulated intramembrane proteolysis (RIP) to release the cytosol-facing N-terminal transcription factor domain. The cleavage is performed sequentially by site-1 and site-2 proteases (S1P/MBTPS1 and S2P/MBTPS2). RIP is induced by TGFB1 and ceramide. In terms of processing, N-glycosylated. Post-translationally, ubiquitinated by HRD1/SYVN1; undergoes 'Lys-48'-linked ubiquitination, followed by rapid proteasomal degradation under normal conditions. Upon ER stress, SYVN1 E3 ubiquitin-protein ligase dissociates from its substrate, ubiquitination does not occur and CREB3L1 is stabilized. Expressed in several tissues, with highest levels in pancreas and prostate. Expressed at relatively lower levels in brain.

The protein localises to the endoplasmic reticulum membrane. Its subcellular location is the nucleus. Precursor of the transcription factor form (Processed cyclic AMP-responsive element-binding protein 3-like protein 1), which is embedded in the endoplasmic reticulum membrane with N-terminal DNA-binding and transcription activation domains oriented toward the cytosolic face of the membrane. In response to ER stress or DNA damage, transported to the Golgi, where it is cleaved in a site-specific manner by resident proteases S1P/MBTPS1 and S2P/MBTPS2. The released N-terminal cytosolic domain is translocated to the nucleus where it activates transcription of specific target genes involved in the cell-cycle progression inhibition. Functionally, transcription factor involved in cell type specific DNA damage and unfolded protein response (UPR). Binds the DNA consensus sequence 5'-GTGXGCXGC-3'. Plays a critical role in bone formation through the transcription of COL1A1, and possibly COL1A2, and the secretion of bone matrix proteins. Directly binds to the UPR element (UPRE)-like sequence in an osteoblast-specific COL1A1 promoter region and induces its transcription. Does not regulate COL1A1 in other tissues, such as skin. Required to protect astrocytes from ER stress-induced cell death. In astrocytes, binds to the cAMP response element (CRE) of the BiP/HSPA5 promoter and participate in its transcriptional activation. In astrocytes and osteoblasts, upon DNA damage, inhibits cell-cycle progression after G2/M phase by binding to promoters and activating transcription of genes encoding cell-cycle inhibitors, such as p21/CDKN1A. Required for TGFB1 to activate genes involved in the assembly of collagen extracellular matrix. Its function is as follows. (Microbial infection) May play a role in limiting virus spread by inhibiting proliferation of virus-infected cells. Upon infection with diverse DNA and RNA viruses, inhibits cell-cycle progression by binding to promoters and activating transcription of genes encoding cell-cycle inhibitors, such as p21/CDKN1A. The protein is Cyclic AMP-responsive element-binding protein 3-like protein 1 of Homo sapiens (Human).